The primary structure comprises 942 residues: Diacylglycerol kinase theta (942 aa).

Positions 1–59 are disordered; that stretch reads MAAAAEPGARAWLGGGSPRPGSPACSPVLGSGGRARPGPGPGPGPERAGVRAPGPAAAP. Phosphoserine occurs at positions 22 and 26. The segment covering 45 to 59 has biased composition (low complexity); it reads PERAGVRAPGPAAAP. 3 consecutive Phorbol-ester/DAG-type zinc fingers follow at residues 60–108, 121–168, and 183–234; these read GHSF…RIPC, AHCF…CSDC, and HHHW…APEC. Positions 269 to 295 are disordered; that stretch reads EPGEGGDGADGSAAVGPGRETQATPES. Positions 395 to 494 constitute a Ras-associating domain; sequence AQEVLKIYPG…TRFYVAESRD (100 aa). 2 short sequence motifs (LXXLL motif) span residues 555 to 559 and 574 to 578; these read LYMLL and LPDLL. The region spanning 584–721 is the DAGKc domain; that stretch reads PDSCPLLVFV…MDRWTILLDA (138 aa). The interval 908–942 is disordered; it reads PKVHMLRKAKQKPRRAGTTRDARADAAPAPESDPR. The segment covering 911-924 has biased composition (basic residues); sequence HMLRKAKQKPRRAG. Residues 932–942 show a composition bias toward low complexity; sequence DAAPAPESDPR.

It belongs to the eukaryotic diacylglycerol kinase family. As to quaternary structure, interacts with RHOA (constitutively activated, GTP-bound); the interaction inhibits DGKQ. Interacts with PRKCE. Interacts with PRKCH. Interacts with PLCB1. Interacts with NR5A1; the interaction requires both LXXLL motifs in DGKQ and is required for full phosphatidic acid-mediated activation of NR5A1. Phosphorylated by PRKCE and PRKCH in vitro.

It is found in the cytoplasm. It localises to the cytosol. Its subcellular location is the cell membrane. The protein localises to the synapse. The protein resides in the cytoskeleton. It is found in the nucleus. It localises to the nucleus speckle. Its subcellular location is the nucleus matrix. It catalyses the reaction a 1,2-diacyl-sn-glycerol + ATP = a 1,2-diacyl-sn-glycero-3-phosphate + ADP + H(+). It carries out the reaction a 1-O-alkyl-sn-glycerol + ATP = a 1-O-alkyl-sn-glycero-3-phosphate + ADP + H(+). The catalysed reaction is 1-O-alkyl-2-acyl-sn-glycerol + ATP = 1-O-alkyl-2-acyl-sn-glycero-3-phosphate + ADP + H(+). The enzyme catalyses 1,2-di-(9Z-octadecenoyl)-sn-glycerol + ATP = 1,2-di-(9Z-octadecenoyl)-sn-glycero-3-phosphate + ADP + H(+). It catalyses the reaction 1-O-hexadecyl-sn-glycerol + ATP = 1-O-hexadecyl-sn-glycero-3-phosphate + ADP + H(+). It carries out the reaction 1-O-hexadecyl-2-acetyl-sn-glycerol + ATP = 1-O-hexadecyl-2-acetyl-sn-glycero-3-phosphate + ADP + H(+). The catalysed reaction is 1-octadecanoyl-2-(5Z,8Z,11Z,14Z-eicosatetraenoyl)-sn-glycerol + ATP = 1-octadecanoyl-2-(5Z,8Z,11Z,14Z-eicosatetraenoyl)-sn-glycero-3-phosphate + ADP + H(+). It functions in the pathway lipid metabolism; glycerolipid metabolism. With respect to regulation, activated by phosphatidylserine. Functionally, diacylglycerol kinase that converts diacylglycerol/DAG into phosphatidic acid/phosphatidate/PA and regulates the respective levels of these two bioactive lipids. Thereby, acts as a central switch between the signaling pathways activated by these second messengers with different cellular targets and opposite effects in numerous biological processes. Within the adrenocorticotropic hormone signaling pathway, produces phosphatidic acid which in turn activates NR5A1 and subsequent steroidogenic gene transcription. Also functions downstream of the nerve growth factor signaling pathway being specifically activated in the nucleus by the growth factor. Through its diacylglycerol activity also regulates synaptic vesicle endocytosis. The chain is Diacylglycerol kinase theta from Homo sapiens (Human).